Reading from the N-terminus, the 357-residue chain is DNA replication and repair protein RecF (357 aa).

30-37 serves as a coordination point for ATP; that stretch reads GPNGSGKT.

This sequence belongs to the RecF family.

Its subcellular location is the cytoplasm. Functionally, the RecF protein is involved in DNA metabolism; it is required for DNA replication and normal SOS inducibility. RecF binds preferentially to single-stranded, linear DNA. It also seems to bind ATP. This Vibrio campbellii (strain ATCC BAA-1116) protein is DNA replication and repair protein RecF.